A 137-amino-acid polypeptide reads, in one-letter code: Translation initiation factor 2 subunit beta (137 aa).

Belongs to the eIF-2-beta/eIF-5 family. As to quaternary structure, heterotrimer composed of an alpha, a beta and a gamma chain.

Its function is as follows. eIF-2 functions in the early steps of protein synthesis by forming a ternary complex with GTP and initiator tRNA. This is Translation initiation factor 2 subunit beta (eif2b) from Archaeoglobus fulgidus (strain ATCC 49558 / DSM 4304 / JCM 9628 / NBRC 100126 / VC-16).